The following is a 552-amino-acid chain: MAGUK p55 subfamily member 2 (552 aa).

2 L27 domains span residues 8-59 and 60-118; these read SESA…EETK and LEAV…YETP. At serine 42 the chain carries Phosphoserine. Residue threonine 117 is modified to Phosphothreonine. Serine 121 carries the phosphoserine modification. Residues 140–219 enclose the PDZ domain; that stretch reads MVGIRKTAGE…SVILKILPSY (80 aa). Positions 225–293 constitute an SH3 domain; it reads PRQVFVKCHF…PSQLLEEKRK (69 aa). Residues 350–537 form the Guanylate kinase-like domain; the sequence is RKTLVLIGAQ…TFRELQTAME (188 aa).

The protein belongs to the MAGUK family. Can homomultimerise. Interacts with CACNG2. Interacts (via the SH3-Guanylate kinase-like sub-module) with DLG4/PSD95 and DLGAP1/GKAP. Interacts (via the PDZ domain) with CADM1 (via C-terminus). Interacts with KCNN2/SK2 (via N-terminal domain). Interacts with SRC. In terms of processing, phosphorylated by SRC. In terms of tissue distribution, expressed in pyramidal neurons of CA1 region of the hippocampus.

Its subcellular location is the cell projection. It localises to the dendrite. It is found in the postsynaptic density. The protein resides in the cytoplasm. The protein localises to the cytoskeleton. Its subcellular location is the membrane. Its function is as follows. Postsynaptic MAGUK scaffold protein that links CADM1 cell adhesion molecules to core components of the postsynaptic density. In CA1 pyramidal neurons, required for synaptic KCNN2-containing channel function and long-term potentiation expression. Seems to negatively regulate SRC function in epithelial cells. The protein is MAGUK p55 subfamily member 2 of Mus musculus (Mouse).